Reading from the N-terminus, the 599-residue chain is Kelch-like protein 24a (599 aa).

In terms of domain architecture, BTB spans 65–132 (TDVIISVQGR…VYTGRACITT (68 aa)). Positions 167-269 (CLGIQRFADA…HPNYFVQTVE (103 aa)) constitute a BACK domain. Kelch repeat units follow at residues 313 to 362 (VIVV…ALRN), 364 to 406 (IILS…VLLG), 407 to 453 (KVYA…SCAG), 455 to 501 (LFVI…SLNH), 503 to 543 (IYVC…VCNG), and 545 to 591 (IYIL…TVHR).

Forms homodimers. Component of the BCR(KLHL24) E3 ubiquitin ligase complex.

It localises to the perikaryon. Its subcellular location is the cell projection. The protein localises to the axon. It is found in the cytoplasm. The protein resides in the cell junction. It localises to the desmosome. Its subcellular location is the adherens junction. Functionally, necessary to maintain the balance between intermediate filament stability and degradation, a process that is essential for skin integrity. Reduces kainate receptor-mediated currents in brain neurons, most probably by modulating channel properties. It is required for proper heart development. In Danio rerio (Zebrafish), this protein is Kelch-like protein 24a.